The following is a 310-amino-acid chain: Olfactory receptor 4C16 (310 aa).

At 1 to 23 the chain is on the extracellular side; sequence MQLNNNVTEFILLGLTQDPFWKK. Residue Asn6 is glycosylated (N-linked (GlcNAc...) asparagine). The chain crosses the membrane as a helical span at residues 24-47; that stretch reads IVFVIFLRLYLGTLLGNLLIIISV. The Cytoplasmic portion of the chain corresponds to 48-55; the sequence is KTSQALKN. The helical transmembrane segment at 56 to 77 threads the bilayer; sequence PMFFFLFYLSLSDTCLSTSITP. The Extracellular segment spans residues 78–98; that stretch reads RMIVDALLKKTTISFSECMIQ. Cys95 and Cys187 are oxidised to a cystine. Residues 99–118 traverse the membrane as a helical segment; sequence VFSSHVFGCLEIFILILTAV. The Cytoplasmic portion of the chain corresponds to 119 to 137; it reads DRYVDICKPLHYMTIISQW. Residues 138-156 traverse the membrane as a helical segment; that stretch reads VCGVLMAVAWVGSCVHSLV. Residues 157–193 are Extracellular-facing; it reads QIFLALSLPFCGPNVINHCFCDLQPLLKQACSETYVV. A helical transmembrane segment spans residues 194-217; it reads NLLLVSNSGAICAVSYVMLIFSYV. Residues 218–233 lie on the Cytoplasmic side of the membrane; sequence IFLHSLRNHSAEVIKK. Residues 234–256 traverse the membrane as a helical segment; that stretch reads ALSTCVSHIIVVILFFGPCIFMY. The Extracellular portion of the chain corresponds to 257–267; the sequence is TCLATVFPMDK. A helical membrane pass occupies residues 268-287; that stretch reads MIAVFYTVGTSFLNPVIYTL. Residues 288-310 are Cytoplasmic-facing; the sequence is KNTEVKSAMRKLWSKKLITDDKR.

Belongs to the G-protein coupled receptor 1 family.

The protein localises to the cell membrane. In terms of biological role, odorant receptor. The polypeptide is Olfactory receptor 4C16 (OR4C16) (Homo sapiens (Human)).